Here is a 152-residue protein sequence, read N- to C-terminus: MTDTVDIPIIAKRLPVYAHPGDAGADLCAAEAVTLEPGERHTVPTGVSIALPEGYAAFVVPRSGLAMKHGLTIVNAPGTVDAGYRGEIRVTVLNTDRSMPYDIAVGDRIAQLIVMPVTRAVFVPVDTLPDSHRGTAGFGSSGYTVTQAGEHA.

Substrate contacts are provided by residues 62 to 64, Asn-75, and 79 to 81; these read RSG and TVD.

The protein belongs to the dUTPase family. Requires Mg(2+) as cofactor.

The enzyme catalyses dUTP + H2O = dUMP + diphosphate + H(+). It functions in the pathway pyrimidine metabolism; dUMP biosynthesis; dUMP from dCTP (dUTP route): step 2/2. In terms of biological role, this enzyme is involved in nucleotide metabolism: it produces dUMP, the immediate precursor of thymidine nucleotides and it decreases the intracellular concentration of dUTP so that uracil cannot be incorporated into DNA. In Leifsonia xyli subsp. xyli (strain CTCB07), this protein is Deoxyuridine 5'-triphosphate nucleotidohydrolase.